We begin with the raw amino-acid sequence, 741 residues long: Alpha-1,6-mannosylglycoprotein 6-beta-N-acetylglucosaminyltransferase A (741 aa).

The Cytoplasmic segment spans residues 1–13; sequence MALFTPWKLSSQK. A helical; Signal-anchor for type II membrane protein transmembrane segment spans residues 14 to 30; it reads LGFFLVTFGFIWGMMLL. The Lumenal portion of the chain corresponds to 31–741; it reads HFTIQQRTQP…GQVALCKDCL (711 aa). 3 N-linked (GlcNAc...) asparagine glycosylation sites follow: Asn-110, Asn-115, and Asn-118. Disulfide bonds link Cys-145–Cys-183, Cys-156–Cys-196, Cys-172–Cys-338, Cys-372–Cys-626, Cys-649–Cys-724, Cys-653–Cys-726, Cys-660–Cys-713, Cys-681–Cys-702, and Cys-737–Cys-740. The interval 213-741 is sufficient for catalytic activity; the sequence is NSLAEIRTDF…GQVALCKDCL (529 aa). Residues 264 to 269 form an important for activity in FGF2 release region; that stretch reads KRKRKK. N-linked (GlcNAc...) asparagine glycosylation occurs at Asn-334. Position 378 to 379 (378 to 379) interacts with substrate; sequence DS. Asn-433 and Asn-447 each carry an N-linked (GlcNAc...) asparagine glycan. UDP-N-acetyl-alpha-D-glucosamine is bound at residue Glu-526. Residue Lys-554 coordinates substrate.

It belongs to the glycosyltransferase 18 family. N-glycosylated. Post-translationally, a secreted form is released from the membrane after cleavage by gamma-secretase.

The protein resides in the golgi apparatus membrane. It localises to the secreted. The catalysed reaction is N(4)-{beta-D-GlcNAc-(1-&gt;2)-[beta-D-GlcNAc-(1-&gt;4)]-alpha-D-Man-(1-&gt;3)-[beta-D-GlcNAc-(1-&gt;2)-alpha-D-Man-(1-&gt;6)]-beta-D-Man-(1-&gt;4)-beta-D-GlcNAc-(1-&gt;4)-beta-D-GlcNAc}-L-asparaginyl-[protein] + UDP-N-acetyl-alpha-D-glucosamine = N(4)-{beta-D-GlcNAc-(1-&gt;2)-[beta-D-GlcNAc-(1-&gt;4)]-alpha-D-Man-(1-&gt;3)-[beta-D-GlcNAc-(1-&gt;2)-[beta-D-GlcNAc-(1-&gt;6)]-alpha-D-Man-(1-&gt;6)]-beta-D-Man-(1-&gt;4)-beta-D-GlcNAc-(1-&gt;4)-beta-D-GlcNAc}-L-asparaginyl-[protein] + UDP + H(+). Its pathway is protein modification; protein glycosylation. Its activity is regulated as follows. Activity is increased by Mn(2+) and Mg(2+). Functionally, catalyzes the addition of N-acetylglucosamine (GlcNAc) in beta 1-6 linkage to the alpha-linked mannose of biantennary N-linked oligosaccharides. Catalyzes an important step in the biosynthesis of branched, complex-type N-glycans, such as those found on EGFR, TGFR (TGF-beta receptor) and CDH2. Via its role in the biosynthesis of complex N-glycans, plays an important role in the activation of cellular signaling pathways, reorganization of the actin cytoskeleton, cell-cell adhesion and cell migration. MGAT5-dependent EGFR N-glycosylation enhances the interaction between EGFR and LGALS3 and thereby prevents rapid EGFR endocytosis and prolongs EGFR signaling. Required for efficient interaction between TGFB1 and its receptor. Enhances activation of intracellular signaling pathways by several types of growth factors, including FGF2, PDGF, IGF, TGFB1 and EGF. MGAT5-dependent CDH2 N-glycosylation inhibits CDH2-mediated homotypic cell-cell adhesion and contributes to the regulation of downstream signaling pathways. Promotes cell migration. Contributes to the regulation of the inflammatory response. MGAT5-dependent TCR N-glycosylation enhances the interaction between TCR and LGALS3, limits agonist-induced TCR clustering, and thereby dampens TCR-mediated responses to antigens. Required for normal leukocyte evasation and accumulation at sites of inflammation. Inhibits attachment of monocytes to the vascular endothelium and subsequent monocyte diapedesis. In terms of biological role, promotes proliferation of umbilical vein endothelial cells and angiogenesis, at least in part by promoting the release of the growth factor FGF2 from the extracellular matrix. This chain is Alpha-1,6-mannosylglycoprotein 6-beta-N-acetylglucosaminyltransferase A (MGAT5), found in Homo sapiens (Human).